Here is an 851-residue protein sequence, read N- to C-terminus: Alanine--tRNA ligase (851 aa).

Positions 535, 539, 637, and 641 each coordinate Zn(2+).

Belongs to the class-II aminoacyl-tRNA synthetase family. Requires Zn(2+) as cofactor.

It localises to the cytoplasm. It carries out the reaction tRNA(Ala) + L-alanine + ATP = L-alanyl-tRNA(Ala) + AMP + diphosphate. In terms of biological role, catalyzes the attachment of alanine to tRNA(Ala) in a two-step reaction: alanine is first activated by ATP to form Ala-AMP and then transferred to the acceptor end of tRNA(Ala). Also edits incorrectly charged Ser-tRNA(Ala) and Gly-tRNA(Ala) via its editing domain. The sequence is that of Alanine--tRNA ligase from Acholeplasma laidlawii (strain PG-8A).